Reading from the N-terminus, the 278-residue chain is tRNA pseudouridine synthase A (278 aa).

The Nucleophile role is filled by aspartate 52. Tyrosine 111 serves as a coordination point for substrate. Positions 253–264 (AKAGPLEAAPLG) are enriched in low complexity. Residues 253 to 278 (AKAGPLEAAPLGEAPLKEATLKEDWR) form a disordered region. Residues 267–278 (PLKEATLKEDWR) are compositionally biased toward basic and acidic residues.

The protein belongs to the tRNA pseudouridine synthase TruA family. In terms of assembly, homodimer.

It catalyses the reaction uridine(38/39/40) in tRNA = pseudouridine(38/39/40) in tRNA. In terms of biological role, formation of pseudouridine at positions 38, 39 and 40 in the anticodon stem and loop of transfer RNAs. In Rhodospirillum rubrum (strain ATCC 11170 / ATH 1.1.1 / DSM 467 / LMG 4362 / NCIMB 8255 / S1), this protein is tRNA pseudouridine synthase A.